A 165-amino-acid chain; its full sequence is Cyclic pyranopterin monophosphate synthase (165 aa).

Residues 76-78 and 119-120 each bind substrate; these read LCH and ME. Residue Asp134 is part of the active site.

The protein belongs to the MoaC family. Homohexamer; trimer of dimers.

The catalysed reaction is (8S)-3',8-cyclo-7,8-dihydroguanosine 5'-triphosphate = cyclic pyranopterin phosphate + diphosphate. It participates in cofactor biosynthesis; molybdopterin biosynthesis. Catalyzes the conversion of (8S)-3',8-cyclo-7,8-dihydroguanosine 5'-triphosphate to cyclic pyranopterin monophosphate (cPMP). In Photobacterium profundum (strain SS9), this protein is Cyclic pyranopterin monophosphate synthase.